The primary structure comprises 324 residues: Bacilliredoxin reductase Bdr (324 aa).

Cysteine 220 carries the post-translational modification S-bacillithiol cysteine disulfide.

In terms of assembly, interacts with BrxC. Requires FAD as cofactor. Post-translationally, C-terminal Cys can react with bacillithiol (BSH) to form mixed disulfides. S-bacillithiolation protects Cys residues against overoxidation by acting as a redox switch in response to oxidative stress.

S-bacillithiolation is the formation of mixed disulfide bonds between protein thiols and the general thiol reductant bacillithiol (BSH) under oxidative stress. BSH is an equivalent of glutathione (GSH) in Firmicutes. This protein is a NADPH-dependent bacilliredoxin reductase, which debacillithiolates (removes BSH) the S-bacillithiolated BrxB (BrxB-SSB), and to a lesser extent BrxC (BrxC-SSB). Involved in a redox cascade increasing the efficacy of BrxB function by reducing BrxB-SSB and thus reactivating it. Has NADPH-dependent oxidase activity under aerobic conditions producing hydrogen peroxide (H(2)O(2)). In Bacillus subtilis (strain 168), this protein is Bacilliredoxin reductase Bdr.